Here is a 273-residue protein sequence, read N- to C-terminus: Putative phosphoenolpyruvate synthase regulatory protein (273 aa).

Position 153–160 (153–160) interacts with ADP; it reads GVSRCGKT.

It belongs to the pyruvate, phosphate/water dikinase regulatory protein family. PSRP subfamily.

The catalysed reaction is [pyruvate, water dikinase] + ADP = [pyruvate, water dikinase]-phosphate + AMP + H(+). It catalyses the reaction [pyruvate, water dikinase]-phosphate + phosphate + H(+) = [pyruvate, water dikinase] + diphosphate. Its function is as follows. Bifunctional serine/threonine kinase and phosphorylase involved in the regulation of the phosphoenolpyruvate synthase (PEPS) by catalyzing its phosphorylation/dephosphorylation. The protein is Putative phosphoenolpyruvate synthase regulatory protein of Yersinia pseudotuberculosis serotype I (strain IP32953).